Consider the following 219-residue polypeptide: MYEQLFSPTVQHTLDLVGIFVFAISGALLAVRKNFDVFGIAVLAEVTALGGGLFRDLVIGAVPPAAFTDLGYFLTPLLATLLVFFLHPHVERLQTGVNIFDAAGLGLFCVAGTTKAYDYGLGLTASACLGLTTAVGGGVLRDVLANEVPSLLRWDRDLYAVPAIVGSAMVALCIRYEALTPFTSGLAVVTAFVLRLLALRFHWRAPRAWNRRSTVVEGD.

The next 6 membrane-spanning stretches (helical) occupy residues 10–30 (VQHTLDLVGIFVFAISGALLA), 34–54 (NFDVFGIAVLAEVTALGGGLF), 66–86 (AFTDLGYFLTPLLATLLVFFL), 93–113 (LQTGVNIFDAAGLGLFCVAGT), 120–140 (GLGLTASACLGLTTAVGGGVL), and 158–178 (LYAVPAIVGSAMVALCIRYEA).

This sequence belongs to the UPF0126 family.

It localises to the cell membrane. This chain is UPF0126 membrane protein SCO5481, found in Streptomyces coelicolor (strain ATCC BAA-471 / A3(2) / M145).